We begin with the raw amino-acid sequence, 155 residues long: Small ribosomal subunit protein uS7 (155 aa).

The protein belongs to the universal ribosomal protein uS7 family. In terms of assembly, part of the 30S ribosomal subunit. Contacts proteins S9 and S11.

In terms of biological role, one of the primary rRNA binding proteins, it binds directly to 16S rRNA where it nucleates assembly of the head domain of the 30S subunit. Is located at the subunit interface close to the decoding center, probably blocks exit of the E-site tRNA. This chain is Small ribosomal subunit protein uS7, found in Chlorobium limicola (strain DSM 245 / NBRC 103803 / 6330).